Consider the following 185-residue polypeptide: Lipid A acyltransferase PagP (185 aa).

Positions 1-14 are cleaved as a signal peptide; it reads MKLKPVLYLLMLLG. Residue C15 is the site of N-palmitoyl cysteine attachment. Residue C15 is the site of S-diacylglycerol cysteine attachment. Active-site residues include H57, D100, and S101.

It belongs to the lipid A palmitoyltransferase family. In terms of assembly, homodimer.

It is found in the cell outer membrane. The enzyme catalyses a lipid A + a 1,2-diacyl-sn-glycero-3-phosphocholine = a hepta-acyl lipid A + a 2-acyl-sn-glycero-3-phosphocholine. It catalyses the reaction a lipid IVA + a 1,2-diacyl-sn-glycero-3-phosphocholine = a lipid IVB + a 2-acyl-sn-glycero-3-phosphocholine. It carries out the reaction a lipid IIA + a 1,2-diacyl-sn-glycero-3-phosphocholine = a lipid IIB + a 2-acyl-sn-glycero-3-phosphocholine. Transfers a fatty acid residue from the sn-1 position of a phospholipid to the N-linked hydroxyfatty acid chain on the proximal unit of lipid A or its precursors. This chain is Lipid A acyltransferase PagP, found in Erwinia sp. (strain Ejp617).